The sequence spans 82 residues: Putative defensin-like protein 70 (82 aa).

A signal peptide spans methionine 1–glycine 27. Disulfide bonds link cysteine 39/cysteine 80, cysteine 43/cysteine 66, cysteine 52/cysteine 78, and cysteine 56/cysteine 79.

The protein belongs to the DEFL family.

The protein resides in the secreted. The protein is Putative defensin-like protein 70 (LCR83) of Arabidopsis thaliana (Mouse-ear cress).